The following is a 215-amino-acid chain: Cytochrome b6 (215 aa).

A helical transmembrane segment spans residues 32–52 (IFYCLGGITLTCFLVQVATGF). Position 35 (Cys35) interacts with heme c. 2 residues coordinate heme b: His86 and His100. The next 3 helical transmembrane spans lie at 90–110 (ASMM…TGGF), 116–136 (LTWV…VTGY), and 186–206 (LHTF…FLMI). Positions 187 and 202 each coordinate heme b.

Belongs to the cytochrome b family. PetB subfamily. As to quaternary structure, the 4 large subunits of the cytochrome b6-f complex are cytochrome b6, subunit IV (17 kDa polypeptide, PetD), cytochrome f and the Rieske protein, while the 4 small subunits are PetG, PetL, PetM and PetN. The complex functions as a dimer. Heme b serves as cofactor. Heme c is required as a cofactor.

It localises to the plastid. Its subcellular location is the chloroplast thylakoid membrane. Functionally, component of the cytochrome b6-f complex, which mediates electron transfer between photosystem II (PSII) and photosystem I (PSI), cyclic electron flow around PSI, and state transitions. The chain is Cytochrome b6 from Pelargonium hortorum (Common geranium).